We begin with the raw amino-acid sequence, 325 residues long: MATIRELRDRIRSVNSTKKITKAQELIATSRITKAQGRVAAAAPYAEEIQRVLERLASASSLDHPMLREREGGKRAAVLVVTSDRGMAGGYNHNVLKKAAELEKLLAESGYEVVRYVTGKKGVDYYKFRAEDVAGAWTGFSQDPDWAATHNVRRHLIDGFTASSEGEAAWREGLNLSEGQDIQGFDQVHVVYTEFISMLTQNPVVHQLLPVEPVIEDEIFEKGEDLLSSSGDVEPDYEFEPDADTLLEALLPQYVSRRLFSIFLEAAAAESASRRNAMKSATDNASELVKDLSRVANQARQAQITQEITEIVGGAGALADSGESD.

Belongs to the ATPase gamma chain family. As to quaternary structure, F-type ATPases have 2 components, CF(1) - the catalytic core - and CF(0) - the membrane proton channel. CF(1) has five subunits: alpha(3), beta(3), gamma(1), delta(1), epsilon(1). CF(0) has three main subunits: a, b and c.

The protein resides in the cell membrane. Functionally, produces ATP from ADP in the presence of a proton gradient across the membrane. The gamma chain is believed to be important in regulating ATPase activity and the flow of protons through the CF(0) complex. This Corynebacterium glutamicum (strain R) protein is ATP synthase gamma chain.